A 325-amino-acid chain; its full sequence is Thiamine-monophosphate kinase (325 aa).

Aspartate 27 and aspartate 44 together coordinate Mg(2+). Histidine 51 serves as a coordination point for substrate. Aspartate 73 is a Mg(2+) binding site. ATP is bound by residues tyrosine 103, 120–121, and arginine 147; that span reads GD. Aspartate 121 serves as a coordination point for Mg(2+). Aspartate 215 is a binding site for Mg(2+). Serine 217 serves as a coordination point for ATP. Residue aspartate 218 coordinates Mg(2+). Substrate is bound by residues glutamate 264 and tyrosine 321.

Belongs to the thiamine-monophosphate kinase family.

It catalyses the reaction thiamine phosphate + ATP = thiamine diphosphate + ADP. Its pathway is cofactor biosynthesis; thiamine diphosphate biosynthesis; thiamine diphosphate from thiamine phosphate: step 1/1. Functionally, catalyzes the ATP-dependent phosphorylation of thiamine-monophosphate (TMP) to form thiamine-pyrophosphate (TPP), the active form of vitamin B1. The sequence is that of Thiamine-monophosphate kinase from Bacillus subtilis (strain 168).